We begin with the raw amino-acid sequence, 264 residues long: 1-acyl-sn-glycerol-3-phosphate acyltransferase (264 aa).

A helical membrane pass occupies residues 16-36 (MFYTYLRGLVVLLLWSINGNA). The HXXXXD motif signature appears at 57–62 (HRTWWD). A helical membrane pass occupies residues 233 to 253 (LILAIILAILTIIFSFIASFI).

Belongs to the 1-acyl-sn-glycerol-3-phosphate acyltransferase family.

The protein localises to the membrane. The catalysed reaction is a fatty acyl-[ACP] + a 1-acyl-sn-glycero-3-phosphate = a 1,2-diacyl-sn-glycero-3-phosphate + holo-[ACP]. It catalyses the reaction hexadecanoyl-[ACP] + 1-hexadecanoyl-sn-glycero-3-phosphate = 1,2-dihexadecanoyl-sn-glycero-3-phosphate + holo-[ACP]. The protein operates within lipid metabolism; phospholipid metabolism. Its function is as follows. Converts lysophosphatidic acid (LPA) into phosphatidic acid (PA) by incorporating an acyl moiety at the 2 position. This enzyme utilizes acyl-ACP as fatty acyl donor, but not acyl-CoA. The chain is 1-acyl-sn-glycerol-3-phosphate acyltransferase (plsC) from Streptococcus pneumoniae (strain ATCC BAA-255 / R6).